The primary structure comprises 291 residues: uncharacterized protein (291 aa).

A disordered region spans residues 1–55 (MRTHDIPRSPLVGHKKNAAPDGIGASRACCPARENEPFKKGSTNSRGGGVEWSRS). The next 2 helical transmembrane spans lie at 74 to 96 (WWAVGPVLGICAGVWGAAHPVHA) and 188 to 210 (YYYLAIPVALTAGYTVAFWRIRL).

This sequence to T.pallidum TP_0733.

It is found in the cell membrane. This is an uncharacterized protein from Treponema pallidum (strain Nichols).